A 1007-amino-acid chain; its full sequence is Lysosomal alpha-mannosidase (1007 aa).

2 stretches are compositionally biased toward low complexity: residues 1–10 (MGADARPLGV) and 19–28 (AARPGTSSRA). The tract at residues 1-30 (MGADARPLGVRAGGGGRGAARPGTSSRALP) is disordered. A signal peptide spans 1-50 (MGADARPLGVRAGGGGRGAARPGTSSRALPPPLPPLSFLLLLLAAPGARA). Cystine bridges form between Cys56–Cys360 and Cys269–Cys274. Positions 73 and 75 each coordinate Zn(2+). N-linked (GlcNAc...) asparagine glycosylation is present at Asn134. Position 197 (Asp197) interacts with Zn(2+). Catalysis depends on Asp197, which acts as the Nucleophile. N-linked (GlcNAc...) asparagine glycans are attached at residues Asn311, Asn347, and Asn369. 2 cysteine pairs are disulfide-bonded: Cys414–Cys474 and Cys495–Cys503. Position 448 (His448) interacts with Zn(2+). 7 N-linked (GlcNAc...) asparagine glycosylation sites follow: Asn499, Asn543, Asn643, Asn649, Asn690, Asn764, and Asn927.

It belongs to the glycosyl hydrolase 38 family. It depends on Zn(2+) as a cofactor. Post-translationally, processed into 3 peptides of 72 kDa, 41 kDa and 12 kDa.

It is found in the lysosome. The enzyme catalyses Hydrolysis of terminal, non-reducing alpha-D-mannose residues in alpha-D-mannosides.. In terms of biological role, necessary for the catabolism of N-linked carbohydrates released during glycoprotein turnover. This Felis catus (Cat) protein is Lysosomal alpha-mannosidase (MAN2B1).